Here is a 183-residue protein sequence, read N- to C-terminus: Adenine phosphoribosyltransferase (183 aa).

Belongs to the purine/pyrimidine phosphoribosyltransferase family. Homodimer.

Its subcellular location is the cytoplasm. The catalysed reaction is AMP + diphosphate = 5-phospho-alpha-D-ribose 1-diphosphate + adenine. It participates in purine metabolism; AMP biosynthesis via salvage pathway; AMP from adenine: step 1/1. Its function is as follows. Catalyzes a salvage reaction resulting in the formation of AMP, that is energically less costly than de novo synthesis. In Sodalis glossinidius (strain morsitans), this protein is Adenine phosphoribosyltransferase.